Reading from the N-terminus, the 268-residue chain is ELL-associated factor 1 (268 aa).

Residues 106–268 (IQVKKTRAEG…LSESGSDSDD (163 aa)) form a disordered region. Over residues 128 to 154 (ARPPQPSQPPPPPPPMPFRAPTKPPAG) the composition is skewed to pro residues. Residue serine 165 is modified to Phosphoserine. The span at 171–181 (DDIKRELRAEV) shows a compositional bias: basic and acidic residues. Residues 182 to 262 (DIIEQMSSSS…LRNDLQLSES (81 aa)) are necessary for transactivation activity. Residues 188–203 (SSSSGSSSSDSESSSG) are compositionally biased toward low complexity. Positions 238–268 (NGTSRPQGSSQLMNTLRNDLQLSESGSDSDD) are enriched in polar residues.

The protein belongs to the EAF family. As to quaternary structure, component of the super elongation complex (SEC), at least composed of EAF1, EAF2, CDK9, MLLT3/AF9, AFF (AFF1 or AFF4), the P-TEFb complex and ELL (ELL, ELL2 or ELL3). Interacts with ELL and ELL2.

Its subcellular location is the nucleus speckle. It localises to the nucleus. The protein localises to the cajal body. Functionally, acts as a transcriptional transactivator of ELL and ELL2 elongation activities. The protein is ELL-associated factor 1 (Eaf1) of Mus musculus (Mouse).